Consider the following 399-residue polypeptide: 4-hydroxyphenylpyruvate dioxygenase (399 aa).

VOC domains follow at residues 23–166 and 197–355; these read GYDH…LIER and RIDH…LFTK. Residues histidine 200, histidine 283, and glutamate 366 each contribute to the Fe cation site.

The protein belongs to the 4HPPD family. The cofactor is Fe cation.

It carries out the reaction 3-(4-hydroxyphenyl)pyruvate + O2 = homogentisate + CO2. It participates in amino-acid degradation; L-phenylalanine degradation; acetoacetate and fumarate from L-phenylalanine: step 3/6. This chain is 4-hydroxyphenylpyruvate dioxygenase (TCRP), found in Coccidioides posadasii (strain C735) (Valley fever fungus).